We begin with the raw amino-acid sequence, 169 residues long: Ion-translocating oxidoreductase complex subunit B (169 aa).

Positions 1 to 23 are hydrophobic; it reads MIISIIIFSILSFILGVIVSLVS. The 4Fe-4S domain maps to 30-89; the sequence is SNLSLINDIDELLPQMQCAQCGYPGCYAYSQAIVDGNENIYKCIPGGKEVVLKLENLLNK. Cys-47, Cys-50, Cys-55, Cys-72, Cys-116, Cys-119, Cys-122, Cys-126, Cys-146, Cys-149, Cys-152, and Cys-156 together coordinate [4Fe-4S] cluster. 4Fe-4S ferredoxin-type domains follow at residues 107 to 136 and 137 to 166; these read SIVE…GTYN and FRHT…KKIM.

The protein belongs to the 4Fe4S bacterial-type ferredoxin family. RnfB subfamily. In terms of assembly, the complex is composed of six subunits: RnfA, RnfB, RnfC, RnfD, RnfE and RnfG. It depends on [4Fe-4S] cluster as a cofactor.

It is found in the cell inner membrane. Part of a membrane-bound complex that couples electron transfer with translocation of ions across the membrane. This is Ion-translocating oxidoreductase complex subunit B from Buchnera aphidicola subsp. Baizongia pistaciae (strain Bp).